The following is a 247-amino-acid chain: Eukaryotic translation initiation factor 6-1 (247 aa).

The protein belongs to the eIF-6 family. In terms of assembly, monomer. Associates with the 60S ribosomal subunit.

It is found in the cytoplasm. Its subcellular location is the nucleus. It localises to the nucleolus. Its function is as follows. Binds to the 60S ribosomal subunit and prevents its association with the 40S ribosomal subunit to form the 80S initiation complex in the cytoplasm. May also be involved in ribosome biogenesis. The polypeptide is Eukaryotic translation initiation factor 6-1 (Arabidopsis thaliana (Mouse-ear cress)).